The chain runs to 367 residues: MDHVKLVNDPIDIAHIHQLLADEGCGASSVFVGTTRDNFQGKKVLSLAYEAYDSMALKEMNKICSDLRSKWLDLKHIVIYHRLGTVPVCQASVVIAASSPHRSEALESVSFAIDQLKTRVPIWKKEIYEGDNDSEWKENKESIRPKKSKSGFNYAACPCKVEESHDVPRTLVQIRVNDAELAKRLECFVNRKRDEINSQNVIDFKSSFVSSDKDLSDSCARTQSTIIKQEQSNCHLKVRRVNNRCGPQQMEMRPNYELELNKLMGSRDGQTDPTKEMRKSLPNSRLQAIESYMGLTTDNEENIFSRIKRVENRLLQLESISPEYRHFTKREPSSMEAAPPKKIRKKSYSAQELSAFIQKVKDGSEFS.

Substrate-binding positions include 101–102 (HR), Lys117, and 124–126 (KKE). The segment at 326–345 (HFTKREPSSMEAAPPKKIRK) is disordered.

This sequence belongs to the MoaE family. MOCS2B subfamily. In terms of assembly, heterotetramer; composed of 2 small (Mocs2A) and 2 large (Mocs2B) subunits.

The protein resides in the cytoplasm. The enzyme catalyses 2 [molybdopterin-synthase sulfur-carrier protein]-C-terminal-Gly-aminoethanethioate + cyclic pyranopterin phosphate + H2O = molybdopterin + 2 [molybdopterin-synthase sulfur-carrier protein]-C-terminal Gly-Gly + 2 H(+). It functions in the pathway cofactor biosynthesis; molybdopterin biosynthesis. Catalytic subunit of the molybdopterin synthase complex, a complex that catalyzes the conversion of precursor Z into molybdopterin. Acts by mediating the incorporation of 2 sulfur atoms from thiocarboxylated Mocs2A into precursor Z to generate a dithiolene group. This chain is Molybdopterin synthase catalytic subunit, found in Drosophila sechellia (Fruit fly).